The chain runs to 151 residues: Transcriptional regulator SyrB (151 aa).

Residues 1-61 (MADESNTGPV…RYSEQERNDK (61 aa)) form a disordered region. Residues 33 to 48 (PQKAAAEPAQPKAPAA) are compositionally biased toward low complexity. The segment covering 52 to 61 (RYSEQERNDK) has biased composition (basic and acidic residues).

It belongs to the SyrB family.

Responsible for the repression of SyrM activity. The chain is Transcriptional regulator SyrB (syrB) from Rhizobium meliloti (strain 1021) (Ensifer meliloti).